The chain runs to 216 residues: Imidazole glycerol phosphate synthase subunit HisH 1 (216 aa).

The region spanning 4–216 (CVLIVDAGLG…LQNFIALNPC (213 aa)) is the Glutamine amidotransferase type-1 domain. Cys84 acts as the Nucleophile in catalysis. Residues His195 and Glu197 contribute to the active site.

As to quaternary structure, heterodimer of HisH and HisF.

It localises to the cytoplasm. It carries out the reaction 5-[(5-phospho-1-deoxy-D-ribulos-1-ylimino)methylamino]-1-(5-phospho-beta-D-ribosyl)imidazole-4-carboxamide + L-glutamine = D-erythro-1-(imidazol-4-yl)glycerol 3-phosphate + 5-amino-1-(5-phospho-beta-D-ribosyl)imidazole-4-carboxamide + L-glutamate + H(+). The enzyme catalyses L-glutamine + H2O = L-glutamate + NH4(+). It participates in amino-acid biosynthesis; L-histidine biosynthesis; L-histidine from 5-phospho-alpha-D-ribose 1-diphosphate: step 5/9. Its function is as follows. IGPS catalyzes the conversion of PRFAR and glutamine to IGP, AICAR and glutamate. The HisH subunit provides the glutamine amidotransferase activity that produces the ammonia necessary to HisF for the synthesis of IGP and AICAR. In Prochlorococcus marinus (strain MIT 9313), this protein is Imidazole glycerol phosphate synthase subunit HisH 1 (hisH1).